A 124-amino-acid polypeptide reads, in one-letter code: Holo-[acyl-carrier-protein] synthase (124 aa).

Positions 8 and 58 each coordinate Mg(2+).

Belongs to the P-Pant transferase superfamily. AcpS family. Mg(2+) is required as a cofactor.

Its subcellular location is the cytoplasm. The catalysed reaction is apo-[ACP] + CoA = holo-[ACP] + adenosine 3',5'-bisphosphate + H(+). In terms of biological role, transfers the 4'-phosphopantetheine moiety from coenzyme A to a Ser of acyl-carrier-protein. The polypeptide is Holo-[acyl-carrier-protein] synthase (Lacticaseibacillus casei (strain BL23) (Lactobacillus casei)).